The primary structure comprises 320 residues: Minor outer capsid protein P9 (320 aa).

The tract at residues 297–320 (RNDDEEELAGSEFTSLLSDDGRMG) is disordered.

It belongs to the phytoreovirus minor outer capsid protein P9 family.

It localises to the virion. It is found in the host cytoplasm. Functionally, minor outer capsid protein. In Rice gall dwarf virus (RGDV), this protein is Minor outer capsid protein P9.